A 268-amino-acid polypeptide reads, in one-letter code: Tryptophan synthase alpha chain (268 aa).

Catalysis depends on proton acceptor residues Glu40 and Asp51.

The protein belongs to the TrpA family. Tetramer of two alpha and two beta chains.

It catalyses the reaction (1S,2R)-1-C-(indol-3-yl)glycerol 3-phosphate + L-serine = D-glyceraldehyde 3-phosphate + L-tryptophan + H2O. The protein operates within amino-acid biosynthesis; L-tryptophan biosynthesis; L-tryptophan from chorismate: step 5/5. The alpha subunit is responsible for the aldol cleavage of indoleglycerol phosphate to indole and glyceraldehyde 3-phosphate. This is Tryptophan synthase alpha chain from Geobacillus kaustophilus (strain HTA426).